The following is a 401-amino-acid chain: Argininosuccinate synthase (401 aa).

8–16 contributes to the ATP binding site; it reads AYSGGLDTS. Residue tyrosine 87 coordinates L-citrulline. Glycine 117 is an ATP binding site. Positions 119, 123, and 124 each coordinate L-aspartate. Asparagine 123 is an L-citrulline binding site. L-citrulline contacts are provided by arginine 127, serine 175, glutamate 259, and tyrosine 271.

It belongs to the argininosuccinate synthase family. Type 1 subfamily. As to quaternary structure, homotetramer.

It localises to the cytoplasm. It catalyses the reaction L-citrulline + L-aspartate + ATP = 2-(N(omega)-L-arginino)succinate + AMP + diphosphate + H(+). The protein operates within amino-acid biosynthesis; L-arginine biosynthesis; L-arginine from L-ornithine and carbamoyl phosphate: step 2/3. The chain is Argininosuccinate synthase from Pseudarthrobacter chlorophenolicus (strain ATCC 700700 / DSM 12829 / CIP 107037 / JCM 12360 / KCTC 9906 / NCIMB 13794 / A6) (Arthrobacter chlorophenolicus).